Here is a 557-residue protein sequence, read N- to C-terminus: Formate--tetrahydrofolate ligase (557 aa).

65-72 (TPAGEGKT) is an ATP binding site.

The protein belongs to the formate--tetrahydrofolate ligase family.

The enzyme catalyses (6S)-5,6,7,8-tetrahydrofolate + formate + ATP = (6R)-10-formyltetrahydrofolate + ADP + phosphate. It functions in the pathway one-carbon metabolism; tetrahydrofolate interconversion. The chain is Formate--tetrahydrofolate ligase from Zymomonas mobilis subsp. mobilis (strain ATCC 31821 / ZM4 / CP4).